The sequence spans 406 residues: Tryptophan synthase beta chain (406 aa).

At Lys-99 the chain carries N6-(pyridoxal phosphate)lysine.

It belongs to the TrpB family. In terms of assembly, tetramer of two alpha and two beta chains. Pyridoxal 5'-phosphate is required as a cofactor.

The enzyme catalyses (1S,2R)-1-C-(indol-3-yl)glycerol 3-phosphate + L-serine = D-glyceraldehyde 3-phosphate + L-tryptophan + H2O. The protein operates within amino-acid biosynthesis; L-tryptophan biosynthesis; L-tryptophan from chorismate: step 5/5. Its function is as follows. The beta subunit is responsible for the synthesis of L-tryptophan from indole and L-serine. The protein is Tryptophan synthase beta chain of Methylobacterium nodulans (strain LMG 21967 / CNCM I-2342 / ORS 2060).